Consider the following 394-residue polypeptide: Probable aspartate/prephenate aminotransferase (394 aa).

Positions 40, 126, and 176 each coordinate L-aspartate. The residue at position 239 (Lys239) is an N6-(pyridoxal phosphate)lysine. L-aspartate is bound at residue Arg370.

It belongs to the class-I pyridoxal-phosphate-dependent aminotransferase family. As to quaternary structure, homodimer. Pyridoxal 5'-phosphate serves as cofactor.

It localises to the cytoplasm. It carries out the reaction L-aspartate + 2-oxoglutarate = oxaloacetate + L-glutamate. The enzyme catalyses L-arogenate + oxaloacetate = prephenate + L-aspartate. Catalyzes the reversible conversion of aspartate and 2-oxoglutarate to glutamate and oxaloacetate. Can also transaminate prephenate in the presence of aspartate. The sequence is that of Probable aspartate/prephenate aminotransferase (aspC) from Aquifex aeolicus (strain VF5).